We begin with the raw amino-acid sequence, 304 residues long: 1D-myo-inositol 2-acetamido-2-deoxy-alpha-D-glucopyranoside deacetylase 2 (304 aa).

Zn(2+)-binding residues include H17, D20, and H152.

The protein belongs to the MshB deacetylase family. Zn(2+) serves as cofactor.

It carries out the reaction 1D-myo-inositol 2-acetamido-2-deoxy-alpha-D-glucopyranoside + H2O = 1D-myo-inositol 2-amino-2-deoxy-alpha-D-glucopyranoside + acetate. Functionally, catalyzes the deacetylation of 1D-myo-inositol 2-acetamido-2-deoxy-alpha-D-glucopyranoside (GlcNAc-Ins) in the mycothiol biosynthesis pathway. This Catenulispora acidiphila (strain DSM 44928 / JCM 14897 / NBRC 102108 / NRRL B-24433 / ID139908) protein is 1D-myo-inositol 2-acetamido-2-deoxy-alpha-D-glucopyranoside deacetylase 2.